The primary structure comprises 243 residues: MLIIAGLGNPGAKYAGNRHNIGFMAVDAIHRRQSFSPWSKKFKAEIAEGELGGEKVLLIKPQTYMNLSGEAVGEAMRFYKLQPADLVAIYDELDLSPGKARLKTGGGHGGHNGIRSLDAHCGKEYRRLRLGIGHPGIKEMVQNHVLGDFAKADSDWLEPLLETLADNAEMLVRNEDSQLMNKIALALGGKAEEEKPRKEGKDGEKKPAGQSHIRQARSSNQPKLPATGPMAEMLKKMFGNKGE.

Tyr14 is a tRNA binding site. His19 functions as the Proton acceptor in the catalytic mechanism. TRNA contacts are provided by Tyr64, Asn66, and Asn112. Positions 190-207 (KAEEEKPRKEGKDGEKKP) are enriched in basic and acidic residues. Residues 190–243 (KAEEEKPRKEGKDGEKKPAGQSHIRQARSSNQPKLPATGPMAEMLKKMFGNKGE) form a disordered region. Over residues 212–222 (HIRQARSSNQP) the composition is skewed to polar residues.

This sequence belongs to the PTH family. As to quaternary structure, monomer.

The protein resides in the cytoplasm. It catalyses the reaction an N-acyl-L-alpha-aminoacyl-tRNA + H2O = an N-acyl-L-amino acid + a tRNA + H(+). Functionally, hydrolyzes ribosome-free peptidyl-tRNAs (with 1 or more amino acids incorporated), which drop off the ribosome during protein synthesis, or as a result of ribosome stalling. Its function is as follows. Catalyzes the release of premature peptidyl moieties from peptidyl-tRNA molecules trapped in stalled 50S ribosomal subunits, and thus maintains levels of free tRNAs and 50S ribosomes. The chain is Peptidyl-tRNA hydrolase from Rhizobium etli (strain CIAT 652).